The primary structure comprises 313 residues: Methionyl-tRNA formyltransferase (313 aa).

Position 110–113 (110–113 (SLLP)) interacts with (6S)-5,6,7,8-tetrahydrofolate.

This sequence belongs to the Fmt family.

It catalyses the reaction L-methionyl-tRNA(fMet) + (6R)-10-formyltetrahydrofolate = N-formyl-L-methionyl-tRNA(fMet) + (6S)-5,6,7,8-tetrahydrofolate + H(+). Functionally, attaches a formyl group to the free amino group of methionyl-tRNA(fMet). The formyl group appears to play a dual role in the initiator identity of N-formylmethionyl-tRNA by promoting its recognition by IF2 and preventing the misappropriation of this tRNA by the elongation apparatus. The sequence is that of Methionyl-tRNA formyltransferase from Enterococcus faecalis (strain ATCC 700802 / V583).